The following is a 228-amino-acid chain: NAD(P)H-hydrate epimerase (228 aa).

The 206-residue stretch at 9–214 folds into the YjeF N-terminal domain; it reads AQNIDQELFN…DLLLKKYELE (206 aa). Residue 60–64 coordinates (6S)-NADPHX; the sequence is NNGGD. The K(+) site is built by asparagine 61 and aspartate 125. (6S)-NADPHX contacts are provided by residues 129–135 and aspartate 158; that span reads GFSFKGE. K(+) is bound at residue serine 161.

This sequence belongs to the NnrE/AIBP family. The cofactor is K(+).

The enzyme catalyses (6R)-NADHX = (6S)-NADHX. It carries out the reaction (6R)-NADPHX = (6S)-NADPHX. In terms of biological role, catalyzes the epimerization of the S- and R-forms of NAD(P)HX, a damaged form of NAD(P)H that is a result of enzymatic or heat-dependent hydration. This is a prerequisite for the S-specific NAD(P)H-hydrate dehydratase to allow the repair of both epimers of NAD(P)HX. The chain is NAD(P)H-hydrate epimerase from Nematostella vectensis (Starlet sea anemone).